Here is a 63-residue protein sequence, read N- to C-terminus: Adipokinetic prohormone type 1 (63 aa).

The first 22 residues, 1-22 (MVQRCLVVALLVVVVAAALCSA), serve as a signal peptide directing secretion. Position 23 is a pyrrolidone carboxylic acid (Gln23). The residue at position 32 (Thr32) is a Threonine amide.

The protein belongs to the AKH/HRTH/RPCH family. In terms of assembly, adipokinetic hormone precursor-related peptide (APRP) can form three type of disulfide-bond dimers: p1 (alpha-alpha), p2 (alpha-beta), and p3 (beta-beta).

Its subcellular location is the secreted. Its function is as follows. This hormone, released from cells in the corpora cardiaca, causes release of diglycerides from the fat body and stimulation of muscles to use these diglycerides as an energy source during energy-demanding processes. The protein is Adipokinetic prohormone type 1 of Schistocerca gregaria (Desert locust).